Consider the following 1129-residue polypeptide: Phospholipid-transporting ATPase 11C (1129 aa).

The Cytoplasmic segment spans residues 1–83 (MFRRTLNRLC…IIFLVQVTVD (83 aa)). A helical membrane pass occupies residues 84–104 (TPTSPVTSGLPLFFVITVTAI). Residues 105 to 287 (KQGYEDWLRH…SQKCSAVEKS (183 aa)) lie on the Extracellular side of the membrane. The helical transmembrane segment at 288–308 (INAFLIVYLFILLTKAAVCTT) threads the bilayer. The Cytoplasmic segment spans residues 309-343 (LKYVWQSSPYNDEPWYNQKTQKERETFQVLKMFTD). A helical membrane pass occupies residues 344-364 (FLSFMVLFNFIIPVSMYVTVE). Topologically, residues 365–876 (MQKFLGSFFI…YVRIAHLVQY (512 aa)) are extracellular. The active-site 4-aspartylphosphate intermediate is Asp409. ATP contacts are provided by Asp409, Lys410, and Thr411. Asp409 serves as a coordination point for Mg(2+). Mg(2+) is bound at residue Thr411. Ser442 carries the post-translational modification Phosphoserine. 4 residues coordinate ATP: Glu498, Phe540, Lys563, and Arg594. Residues 607–643 (DFERINAQLVEAKMALQDREEKLEKVFDEIETNMNLI) adopt a coiled-coil conformation. Residues Thr674, Gly675, and Asp676 each contribute to the ATP site. Positions 695–726 (TELLELTTKTIEESERKEDRLHELLIEYRKKL) form a coiled coil. Arg789 and Lys795 together coordinate ATP. Asp816 contributes to the Mg(2+) binding site. 2 residues coordinate ATP: Asn819 and Asp820. Residue Asp820 participates in Mg(2+) binding. Residues 877 to 897 (FFYKNLCFILPQFLYQFFCGF) form a helical membrane-spanning segment. Residues 898–905 (SQQPLYDA) lie on the Cytoplasmic side of the membrane. Residues 906 to 926 (AYLTMYNICFTSLPILAYSLL) form a helical membrane-spanning segment. Topologically, residues 927–952 (EQHINIDTLTADPRLYMKITGNAMLQ) are extracellular. Residues 953-973 (LGPFLHWTFLAAFEGTVFFFG) traverse the membrane as a helical segment. Topologically, residues 974–988 (TYFLFQTSSLEDNGK) are cytoplasmic. A helical transmembrane segment spans residues 989–1009 (IYGNWTFGTIVFTVLVFTVTL). Over 1010 to 1023 (KLALDTRFWTWINH) the chain is Extracellular. A helical membrane pass occupies residues 1024–1044 (FVIWGSLAFYVFFSFFWGGII). The Cytoplasmic segment spans residues 1045–1066 (WPFLKQQRMYFVFAQMLCSVST). The helical transmembrane segment at 1067-1087 (WLAIILLIFISLFPEILLIVV) threads the bilayer. Over 1088–1129 (KNVRRRSARRNLSCRRASDSLSARPSVRPLLLRTFSDESNIL) the chain is Extracellular. A phosphoserine mark is found at Ser1105, Ser1113, and Ser1123. Positions 1113–1118 (SVRPLL) match the Di-leucine motif motif.

This sequence belongs to the cation transport ATPase (P-type) (TC 3.A.3) family. Type IV subfamily. As to quaternary structure, component of a P4-ATPase flippase complex which consists of a catalytic alpha subunit ATP11C and an accessory beta subunit TMEM30A. Mg(2+) serves as cofactor. Proteolytically cleaved by CASP3, CASP6 and CASP7. Post-translationally, phosphorylated at Ser-1113 likely by PRKCA; this creates a functional di-leucine motif that is sufficient for endocytosis. Widely expressed. Expressed in retina, brain, liver and testes (at protein level). Expressed in lung, bone marrow, lymph nodes, prostate, ovary and uterus. Expressed in fetus.

Its subcellular location is the cell membrane. The protein resides in the endoplasmic reticulum membrane. The protein localises to the early endosome membrane. It localises to the recycling endosome membrane. The enzyme catalyses ATP + H2O + phospholipidSide 1 = ADP + phosphate + phospholipidSide 2.. It catalyses the reaction a 1,2-diacyl-sn-glycero-3-phospho-L-serine(out) + ATP + H2O = a 1,2-diacyl-sn-glycero-3-phospho-L-serine(in) + ADP + phosphate + H(+). It carries out the reaction a 1,2-diacyl-sn-glycero-3-phosphoethanolamine(out) + ATP + H2O = a 1,2-diacyl-sn-glycero-3-phosphoethanolamine(in) + ADP + phosphate + H(+). In terms of biological role, catalytic component of a P4-ATPase flippase complex which catalyzes the hydrolysis of ATP coupled to the transport of aminophospholipids, phosphatidylserines (PS) and phosphatidylethanolamines (PE), from the outer to the inner leaflet of the plasma membrane. Major PS-flippase in immune cell subsets. In erythrocyte plasma membrane, it is required to maintain PS in the inner leaflet preventing its exposure on the surface. This asymmetric distribution is critical for the survival of erythrocytes in circulation since externalized PS is a phagocytic signal for erythrocyte clearance by splenic macrophages. Required for B cell differentiation past the pro-B cell stage. Seems to mediate PS flipping in pro-B cells. May be involved in the transport of cholestatic bile acids. This Mus musculus (Mouse) protein is Phospholipid-transporting ATPase 11C.